The chain runs to 320 residues: Foldase protein PrsA (320 aa).

An N-terminal signal peptide occupies residues 1–20 (MKMINKLIVPVTASALLLGA). Residue C21 is the site of N-palmitoyl cysteine attachment. C21 carries the S-diacylglycerol cysteine lipid modification. The region spanning 139–245 (EDSKKASHIL…FGYHIIKADK (107 aa)) is the PpiC domain. Positions 159–198 (EGLDDKEAKQKAEEIQKEVSKDPSKFGEIAKKESMDTGSA) are disordered.

This sequence belongs to the PrsA family.

Its subcellular location is the cell membrane. It carries out the reaction [protein]-peptidylproline (omega=180) = [protein]-peptidylproline (omega=0). Plays a major role in protein secretion by helping the post-translocational extracellular folding of several secreted proteins. The sequence is that of Foldase protein PrsA from Staphylococcus aureus (strain bovine RF122 / ET3-1).